The following is a 199-amino-acid chain: MQKPVKRSLKERRQQVLTVLTHMLHSERGMERMTTARIAAEVGVSEAALYRYYPSKTKMFEALIDNLEAHLFTRITQSVKNETHTAARVHNIMQMVLDFARKNPGLTRILTGHALMFEEPQLQARVAQFFDRLELQFINILQMRKLREGKGFDYEERVIAAHLVNLCEGHFMRYVRSNFRHSTQQSFEQQWRLLERLFA.

The HTH tetR-type domain maps to 11–71 (ERRQQVLTVL…ALIDNLEAHL (61 aa)). Positions 34–53 (TTARIAAEVGVSEAALYRYY) form a DNA-binding region, H-T-H motif.

The protein belongs to the nucleoid occlusion factor SlmA family. In terms of assembly, homodimer. Interacts with FtsZ.

The protein resides in the cytoplasm. It is found in the nucleoid. Required for nucleoid occlusion (NO) phenomenon, which prevents Z-ring formation and cell division over the nucleoid. Acts as a DNA-associated cell division inhibitor that binds simultaneously chromosomal DNA and FtsZ, and disrupts the assembly of FtsZ polymers. SlmA-DNA-binding sequences (SBS) are dispersed on non-Ter regions of the chromosome, preventing FtsZ polymerization at these regions. The sequence is that of Nucleoid occlusion factor SlmA from Pasteurella multocida (strain Pm70).